Here is a 103-residue protein sequence, read N- to C-terminus: Histone H4 (103 aa).

Gly residues predominate over residues 1–14 (MSGRGKGGKGLGKG). The interval 1–20 (MSGRGKGGKGLGKGGAKRHR) is disordered. S2 carries the N-acetylserine modification. N6-acetyl-N6-methyllysine; alternate occurs at positions 6 and 13. K17 is subject to N6-acetyllysine. Residues 17–21 (KRHRR) mediate DNA binding.

Belongs to the histone H4 family. As to quaternary structure, the nucleosome is a histone octamer containing two molecules each of H2A, H2B, H3 and H4 assembled in one H3-H4 heterotetramer and two H2A-H2B heterodimers. The octamer wraps approximately 147 bp of DNA.

It localises to the nucleus. Its subcellular location is the chromosome. In terms of biological role, core component of nucleosome. Nucleosomes wrap and compact DNA into chromatin, limiting DNA accessibility to the cellular machineries which require DNA as a template. Histones thereby play a central role in transcription regulation, DNA repair, DNA replication and chromosomal stability. DNA accessibility is regulated via a complex set of post-translational modifications of histones, also called histone code, and nucleosome remodeling. In Mytilus chilensis (Chilean blue mussel), this protein is Histone H4.